The chain runs to 287 residues: Oxaloacetate decarboxylase (287 aa).

Residue serine 50 coordinates substrate. Aspartate 88 provides a ligand contact to Mg(2+). Positions 159 and 235 each coordinate substrate.

This sequence belongs to the isocitrate lyase family. Oxaloacetate decarboxylase subfamily. In terms of assembly, homotetramer; dimer of dimers. It depends on Mg(2+) as a cofactor.

It catalyses the reaction oxaloacetate + H(+) = pyruvate + CO2. Catalyzes the decarboxylation of oxaloacetate into pyruvate. Seems to play a role in maintaining cellular concentrations of bicarbonate and pyruvate. The chain is Oxaloacetate decarboxylase from Pseudomonas aeruginosa (strain LESB58).